A 324-amino-acid chain; its full sequence is Acetyl-coenzyme A carboxylase carboxyl transferase subunit alpha (324 aa).

Residues 42 to 296 (RLSELEEEVY…EKALTRLAEK (255 aa)) form the CoA carboxyltransferase C-terminal domain.

Belongs to the AccA family. In terms of assembly, acetyl-CoA carboxylase is a heterohexamer composed of biotin carboxyl carrier protein (AccB), biotin carboxylase (AccC) and two subunits each of ACCase subunit alpha (AccA) and ACCase subunit beta (AccD).

It is found in the cytoplasm. It carries out the reaction N(6)-carboxybiotinyl-L-lysyl-[protein] + acetyl-CoA = N(6)-biotinyl-L-lysyl-[protein] + malonyl-CoA. It participates in lipid metabolism; malonyl-CoA biosynthesis; malonyl-CoA from acetyl-CoA: step 1/1. In terms of biological role, component of the acetyl coenzyme A carboxylase (ACC) complex. First, biotin carboxylase catalyzes the carboxylation of biotin on its carrier protein (BCCP) and then the CO(2) group is transferred by the carboxyltransferase to acetyl-CoA to form malonyl-CoA. The polypeptide is Acetyl-coenzyme A carboxylase carboxyl transferase subunit alpha (Shouchella clausii (strain KSM-K16) (Alkalihalobacillus clausii)).